The primary structure comprises 133 residues: U-scoloptoxin(11)-Sm1a (133 aa).

The N-terminal stretch at Met-1 to Ser-19 is a signal peptide.

It belongs to the scoloptoxin-11 family. Contains 10 disulfide bonds. Expressed by the venom gland.

It is found in the secreted. In Scolopendra morsitans (Tanzanian blue ringleg centipede), this protein is U-scoloptoxin(11)-Sm1a.